Here is a 280-residue protein sequence, read N- to C-terminus: Protein synthesis inhibitor II (280 aa).

An N-acetylalanine modification is found at Ala-1. Glu-174 is an active-site residue.

This sequence belongs to the ribosome-inactivating protein family. Type 1 RIP subfamily.

The protein resides in the cytoplasm. It carries out the reaction Endohydrolysis of the N-glycosidic bond at one specific adenosine on the 28S rRNA.. Inhibits the elongation phase of protein synthesis. It inactivates fungal ribosomes even more effectively than mammalian ribosomes and is thought to function as a constitutive antifungal agent in plants. This is Protein synthesis inhibitor II (RIP30A) from Hordeum vulgare (Barley).